The chain runs to 290 residues: Ventral anterior homeobox 2 (290 aa).

Positions 1 to 17 (MGDGGAERDRGPARRAE) are enriched in basic and acidic residues. Residues 1–75 (MGDGGAERDR…GQPGPGEADH (75 aa)) form a disordered region. Positions 102-161 (PKRTRTSFTAEQLYRLEMEFQRCQYVVGRERTELARQLNLSETQVKVWFQNRRTKQKKDQ) form a DNA-binding region, homeobox. The segment at 205–240 (PSLPGLPASHRGTSLGDPRNSSPRLNPLSSASASPP) is disordered. A compositionally biased stretch (low complexity) spans 222–238 (PRNSSPRLNPLSSASAS).

The protein belongs to the EMX homeobox family.

Its subcellular location is the nucleus. Transcription factor that may function in dorsoventral specification of the forebrain. Regulates the expression of Wnt signaling antagonists including the expression of a truncated TCF7L2 isoform that cannot bind CTNNB1 and acts therefore as a potent dominant-negative Wnt antagonist. Plays a crucial role in eye development and, in particular, in the specification of the ventral optic vesicle. May be a regulator of axial polarization in the retina. In Homo sapiens (Human), this protein is Ventral anterior homeobox 2 (VAX2).